The chain runs to 180 residues: Protein GrpE (180 aa).

This sequence belongs to the GrpE family. In terms of assembly, homodimer.

The protein localises to the cytoplasm. Functionally, participates actively in the response to hyperosmotic and heat shock by preventing the aggregation of stress-denatured proteins, in association with DnaK and GrpE. It is the nucleotide exchange factor for DnaK and may function as a thermosensor. Unfolded proteins bind initially to DnaJ; upon interaction with the DnaJ-bound protein, DnaK hydrolyzes its bound ATP, resulting in the formation of a stable complex. GrpE releases ADP from DnaK; ATP binding to DnaK triggers the release of the substrate protein, thus completing the reaction cycle. Several rounds of ATP-dependent interactions between DnaJ, DnaK and GrpE are required for fully efficient folding. This is Protein GrpE from Picrophilus torridus (strain ATCC 700027 / DSM 9790 / JCM 10055 / NBRC 100828 / KAW 2/3).